Here is a 199-residue protein sequence, read N- to C-terminus: WASH complex subunit 3 (199 aa).

The stretch at 47 to 76 forms a coiled coil; the sequence is VCEEKLSALSLRIQQIETTLNILEAKLSSI. Residues 93–120 are compositionally biased toward polar residues; that stretch reads NISNGHLPSQPDAQSVVVSPQSDNNSMN. 2 disordered regions span residues 93-136 and 170-199; these read NISN…NITT and PDLL…SFSD. Residues 183-192 show a composition bias toward acidic residues; that stretch reads GEPEAEESSD.

Belongs to the CCDC53 family. In terms of assembly, component of the WASH complex.

The sequence is that of WASH complex subunit 3 from Xenopus laevis (African clawed frog).